The sequence spans 254 residues: tRNA (guanine-N(1)-)-methyltransferase (254 aa).

S-adenosyl-L-methionine-binding positions include glycine 119 and isoleucine 139–leucine 144.

This sequence belongs to the RNA methyltransferase TrmD family. As to quaternary structure, homodimer.

Its subcellular location is the cytoplasm. It carries out the reaction guanosine(37) in tRNA + S-adenosyl-L-methionine = N(1)-methylguanosine(37) in tRNA + S-adenosyl-L-homocysteine + H(+). Specifically methylates guanosine-37 in various tRNAs. This Dechloromonas aromatica (strain RCB) protein is tRNA (guanine-N(1)-)-methyltransferase.